The primary structure comprises 145 residues: D-aminoacyl-tRNA deacylase (145 aa).

Residues 137–138 carry the Gly-cisPro motif, important for rejection of L-amino acids motif; that stretch reads GP.

It belongs to the DTD family. In terms of assembly, homodimer.

It is found in the cytoplasm. It catalyses the reaction glycyl-tRNA(Ala) + H2O = tRNA(Ala) + glycine + H(+). The catalysed reaction is a D-aminoacyl-tRNA + H2O = a tRNA + a D-alpha-amino acid + H(+). An aminoacyl-tRNA editing enzyme that deacylates mischarged D-aminoacyl-tRNAs. Also deacylates mischarged glycyl-tRNA(Ala), protecting cells against glycine mischarging by AlaRS. Acts via tRNA-based rather than protein-based catalysis; rejects L-amino acids rather than detecting D-amino acids in the active site. By recycling D-aminoacyl-tRNA to D-amino acids and free tRNA molecules, this enzyme counteracts the toxicity associated with the formation of D-aminoacyl-tRNA entities in vivo and helps enforce protein L-homochirality. In Lactobacillus helveticus (strain DPC 4571), this protein is D-aminoacyl-tRNA deacylase.